A 231-amino-acid chain; its full sequence is Putative aminodeoxychorismate lyase (231 aa).

This sequence belongs to the class-IV pyridoxal-phosphate-dependent aminotransferase family. It depends on pyridoxal 5'-phosphate as a cofactor.

The protein localises to the cytoplasm. It is found in the nucleus. It catalyses the reaction 4-amino-4-deoxychorismate = 4-aminobenzoate + pyruvate + H(+). It functions in the pathway cofactor biosynthesis; tetrahydrofolate biosynthesis; 4-aminobenzoate from chorismate: step 2/2. Converts 4-amino-4-deoxychorismate into 4-aminobenzoate (PABA) and pyruvate. This is Putative aminodeoxychorismate lyase from Schizosaccharomyces pombe (strain 972 / ATCC 24843) (Fission yeast).